Reading from the N-terminus, the 71-residue chain is Small ribosomal subunit protein bS21 (71 aa).

The protein belongs to the bacterial ribosomal protein bS21 family.

The chain is Small ribosomal subunit protein bS21 from Cellvibrio japonicus (strain Ueda107) (Pseudomonas fluorescens subsp. cellulosa).